Reading from the N-terminus, the 72-residue chain is DCLCDCQNQKTEWPELVEKSVEEAKKVILQDKPEAQIIVLPVGTIVTMEYRIDRVRLFVDRLDNIAQVPRVG.

This sequence belongs to the protease inhibitor I13 (potato type I serine protease inhibitor) family.

Inhibits both subtilisin and chymotrypsin. The protein is Subtilisin-chymotrypsin inhibitor-2B of Hordeum vulgare (Barley).